Here is a 513-residue protein sequence, read N- to C-terminus: Laccase (513 aa).

4 Plastocyanin-like domains span residues 45–81 (PTRL…STHF), 101–178 (KTVV…HDPK), 240–318 (WPYL…ILAN), and 378–509 (QDEY…MDIT). Cu cation-binding residues include histidine 105, histidine 107, histidine 153, and histidine 155. The Cu cation site is built by histidine 419, histidine 422, histidine 424, histidine 491, cysteine 492, histidine 493, histidine 497, and methionine 502.

This sequence belongs to the multicopper oxidase family. In terms of assembly, monomer. Requires Cu(2+) as cofactor.

It is found in the spore coat. The catalysed reaction is 4 hydroquinone + O2 = 4 benzosemiquinone + 2 H2O. It catalyses the reaction 2 (4Z,15Z)-bilirubin IXalpha + O2 = 2 biliverdin IXalpha + 2 H2O. Its activity is regulated as follows. Inhibited by azide. Multicopper oxidase that catalyzes the oxidation of a variety of substrates, including phenolic and non-phenolic compounds. Substrates include syringaldazine (SGZ), 2,6-dimethoxyphenol (2,6-DMP) and the non-phenolic compound 2,2'-azino-bis(3-ethylbenzothiazoline-6-sulfonic acid) (ABTS). Has no tyrosinase activity. Is implicated in the biosynthesis of a brownish pigment that characterizes sporulating colonies of B.subtilis, and which appears to be a melanin-like product and to confer protection against UV light. Functionally, in vitro, also shows strong bilirubin oxidase (BOD) activity, and can catalyze the oxidation of free bilirubin (UB), direct bilirubin (conjugated with glucuronic acid, DB) and ditaurobilirubin. The polypeptide is Laccase (Bacillus subtilis (strain 168)).